The primary structure comprises 317 residues: Transaldolase (317 aa).

Catalysis depends on K126, which acts as the Schiff-base intermediate with substrate.

Belongs to the transaldolase family. Type 1 subfamily. Homodimer.

Its subcellular location is the cytoplasm. The enzyme catalyses D-sedoheptulose 7-phosphate + D-glyceraldehyde 3-phosphate = D-erythrose 4-phosphate + beta-D-fructose 6-phosphate. It functions in the pathway carbohydrate degradation; pentose phosphate pathway; D-glyceraldehyde 3-phosphate and beta-D-fructose 6-phosphate from D-ribose 5-phosphate and D-xylulose 5-phosphate (non-oxidative stage): step 2/3. In terms of biological role, transaldolase is important for the balance of metabolites in the pentose-phosphate pathway. This chain is Transaldolase, found in Burkholderia pseudomallei (strain 1710b).